A 196-amino-acid chain; its full sequence is UPF0301 protein BT_1078 (196 aa).

The protein belongs to the UPF0301 (AlgH) family.

The sequence is that of UPF0301 protein BT_1078 from Bacteroides thetaiotaomicron (strain ATCC 29148 / DSM 2079 / JCM 5827 / CCUG 10774 / NCTC 10582 / VPI-5482 / E50).